The following is a 555-amino-acid chain: Glutamate--tRNA ligase (555 aa).

The 'HIGH' region signature appears at 100 to 110 (PNPSGPLHIGH).

The protein belongs to the class-I aminoacyl-tRNA synthetase family. Glutamate--tRNA ligase type 2 subfamily.

It is found in the cytoplasm. The enzyme catalyses tRNA(Glu) + L-glutamate + ATP = L-glutamyl-tRNA(Glu) + AMP + diphosphate. Functionally, catalyzes the attachment of glutamate to tRNA(Glu) in a two-step reaction: glutamate is first activated by ATP to form Glu-AMP and then transferred to the acceptor end of tRNA(Glu). This Methanococcus maripaludis (strain C7 / ATCC BAA-1331) protein is Glutamate--tRNA ligase.